A 147-amino-acid polypeptide reads, in one-letter code: UPF0306 protein YhbP (147 aa).

The protein belongs to the UPF0306 family.

This is UPF0306 protein YhbP from Escherichia coli O7:K1 (strain IAI39 / ExPEC).